A 313-amino-acid polypeptide reads, in one-letter code: Protoheme IX farnesyltransferase (313 aa).

The next 9 helical transmembrane spans lie at 33–53, 59–79, 107–127, 129–149, 162–182, 188–208, 212–232, 252–272, and 292–312; these read IALM…PVML, MPSW…AGSA, VEPA…TLMF, LLVN…YVFV, IVIG…AVTG, AVLL…ALAI, DDYA…EVVT, VADI…WFVA, and LFHM…AAAL.

This sequence belongs to the UbiA prenyltransferase family. Protoheme IX farnesyltransferase subfamily.

The protein resides in the cell membrane. The enzyme catalyses heme b + (2E,6E)-farnesyl diphosphate + H2O = Fe(II)-heme o + diphosphate. It functions in the pathway porphyrin-containing compound metabolism; heme O biosynthesis; heme O from protoheme: step 1/1. Converts heme B (protoheme IX) to heme O by substitution of the vinyl group on carbon 2 of heme B porphyrin ring with a hydroxyethyl farnesyl side group. This Parafrankia sp. (strain EAN1pec) protein is Protoheme IX farnesyltransferase.